The following is a 247-amino-acid chain: Proteasome subunit alpha type-7-B (247 aa).

The protein belongs to the peptidase T1A family. As to quaternary structure, the 26S proteasome consists of a 20S proteasome core and two 19S regulatory subunits. The 20S proteasome core is composed of 28 subunits that are arranged in four stacked rings, resulting in a barrel-shaped structure. The two end rings are each formed by seven alpha subunits, and the two central rings are each formed by seven beta subunits. The catalytic chamber with the active sites is on the inside of the barrel. Post-translationally, phosphorylated in G2 phase.

It localises to the cytoplasm. The protein resides in the nucleus. In terms of biological role, the proteasome is a multicatalytic proteinase complex which is characterized by its ability to cleave peptides with Arg, Phe, Tyr, Leu, and Glu adjacent to the leaving group at neutral or slightly basic pH. The proteasome has an ATP-dependent proteolytic activity. This Xenopus laevis (African clawed frog) protein is Proteasome subunit alpha type-7-B (psma7-b).